Consider the following 62-residue polypeptide: Large ribosomal subunit protein bL32 (62 aa).

The span at 1–16 shows a compositional bias: basic residues; it reads MAVPKRKTSPSRRGMR. The segment at 1 to 44 is disordered; sequence MAVPKRKTSPSRRGMRRSADALKAPTYVEDKDSGELRRPHHIDL. Residues 28-44 are compositionally biased toward basic and acidic residues; sequence VEDKDSGELRRPHHIDL.

This sequence belongs to the bacterial ribosomal protein bL32 family.

This Methylorubrum extorquens (strain CM4 / NCIMB 13688) (Methylobacterium extorquens) protein is Large ribosomal subunit protein bL32.